Reading from the N-terminus, the 214-residue chain is MQPILDWEKNELNTTGLGLIPMVIESSGRGERAYDIYSRLLRERIIFLVGPVTETSANLVIAQLLFLESENSEKDISLYINSPGGLVTAGLAVYDTMQFIKPDVSTLCIGQAASMGALLLTAGAKGKRYCLPNSRVMIHQPLGGFQGQASDIEIHAKEILALKGRLNEILAKHTSQTIRTIEKDTDRDNFLGAEAAVKYSLVDAVLTSRKVKHE.

The active-site Nucleophile is S114. H139 is a catalytic residue.

This sequence belongs to the peptidase S14 family. Fourteen ClpP subunits assemble into 2 heptameric rings which stack back to back to give a disk-like structure with a central cavity, resembling the structure of eukaryotic proteasomes.

It is found in the cytoplasm. It carries out the reaction Hydrolysis of proteins to small peptides in the presence of ATP and magnesium. alpha-casein is the usual test substrate. In the absence of ATP, only oligopeptides shorter than five residues are hydrolyzed (such as succinyl-Leu-Tyr-|-NHMec, and Leu-Tyr-Leu-|-Tyr-Trp, in which cleavage of the -Tyr-|-Leu- and -Tyr-|-Trp bonds also occurs).. In terms of biological role, cleaves peptides in various proteins in a process that requires ATP hydrolysis. Has a chymotrypsin-like activity. Plays a major role in the degradation of misfolded proteins. The sequence is that of ATP-dependent Clp protease proteolytic subunit from Nitrosomonas eutropha (strain DSM 101675 / C91 / Nm57).